The chain runs to 712 residues: Patatin-like phospholipase domain-containing protein AFUA_1G04970 (712 aa).

The span at 1 to 13 (MTSDEKSATRDIY) shows a compositional bias: basic and acidic residues. The tract at residues 1 to 20 (MTSDEKSATRDIYDPNTLPD) is disordered. A helical membrane pass occupies residues 85 to 105 (WPFLFTVFAWITVLGFAYTLT). The PNPLA domain maps to 275–466 (LCLSGGATFA…RTDIPIKALN (192 aa)). The short motif at 306–310 (GTSGG) is the GXSXG element. Ser-308 functions as the Nucleophile in the catalytic mechanism. Catalysis depends on Asp-453, which acts as the Proton acceptor. The segment at 628–688 (RRRQDRAQEH…PDARRSSMFE (61 aa)) is disordered. Composition is skewed to basic and acidic residues over residues 632-646 (DRAQ…ERLD) and 652-664 (RQSD…HYAE). Polar residues predominate over residues 667–676 (DSLSATSSRP). Residues 677 to 688 (HTPDARRSSMFE) show a composition bias toward basic and acidic residues.

The protein belongs to the PLPL family.

The protein resides in the membrane. Functionally, probable lipid hydrolase. This is Patatin-like phospholipase domain-containing protein AFUA_1G04970 from Aspergillus fumigatus (strain ATCC MYA-4609 / CBS 101355 / FGSC A1100 / Af293) (Neosartorya fumigata).